Here is a 430-residue protein sequence, read N- to C-terminus: Histidine--tRNA ligase, chloroplastic (430 aa).

It belongs to the class-II aminoacyl-tRNA synthetase family.

Its subcellular location is the plastid. The protein resides in the chloroplast. It carries out the reaction tRNA(His) + L-histidine + ATP = L-histidyl-tRNA(His) + AMP + diphosphate + H(+). In Pyropia yezoensis (Susabi-nori), this protein is Histidine--tRNA ligase, chloroplastic.